The chain runs to 197 residues: Mediator of RNA polymerase II transcription subunit 10 (197 aa).

The interval 1–39 is disordered; sequence MSSTAGTRRPRQITPTSPSPSPEPQPGATNGSSSTINVA. Polar residues predominate over residues 27–37; it reads GATNGSSSTIN.

This sequence belongs to the Mediator complex subunit 10 family. In terms of assembly, component of the Mediator complex.

It localises to the nucleus. In terms of biological role, component of the Mediator complex, a coactivator involved in the regulated transcription of nearly all RNA polymerase II-dependent genes. Mediator functions as a bridge to convey information from gene-specific regulatory proteins to the basal RNA polymerase II transcription machinery. Mediator is recruited to promoters by direct interactions with regulatory proteins and serves as a scaffold for the assembly of a functional preinitiation complex with RNA polymerase II and the general transcription factors. This Mycosarcoma maydis (Corn smut fungus) protein is Mediator of RNA polymerase II transcription subunit 10 (NUT2).